Here is a 514-residue protein sequence, read N- to C-terminus: 2,3-bisphosphoglycerate-independent phosphoglycerate mutase (514 aa).

The Mn(2+) site is built by aspartate 14 and serine 64. Catalysis depends on serine 64, which acts as the Phosphoserine intermediate. Substrate contacts are provided by residues histidine 125, 155–156 (RD), arginine 187, arginine 193, 263–266 (RADR), and lysine 337. Residues aspartate 404, histidine 408, aspartate 445, histidine 446, and histidine 464 each coordinate Mn(2+).

The protein belongs to the BPG-independent phosphoglycerate mutase family. Monomer. Mn(2+) is required as a cofactor.

It carries out the reaction (2R)-2-phosphoglycerate = (2R)-3-phosphoglycerate. The protein operates within carbohydrate degradation; glycolysis; pyruvate from D-glyceraldehyde 3-phosphate: step 3/5. Its function is as follows. Catalyzes the interconversion of 2-phosphoglycerate and 3-phosphoglycerate. The sequence is that of 2,3-bisphosphoglycerate-independent phosphoglycerate mutase from Pseudoalteromonas translucida (strain TAC 125).